A 526-amino-acid polypeptide reads, in one-letter code: CTP synthase (526 aa).

Positions methionine 1–leucine 270 are amidoligase domain. CTP is bound at residue serine 12. Residue serine 12 coordinates UTP. ATP is bound by residues glycine 13–isoleucine 18 and aspartate 70. Mg(2+) is bound by residues aspartate 70 and glutamate 145. CTP-binding positions include aspartate 152–glutamate 154, lysine 191–glutamine 196, and lysine 227. UTP-binding positions include lysine 191–glutamine 196 and lysine 227. The region spanning valine 293–threonine 525 is the Glutamine amidotransferase type-1 domain. Residue glycine 349 participates in L-glutamine binding. Cysteine 376 functions as the Nucleophile; for glutamine hydrolysis in the catalytic mechanism. L-glutamine contacts are provided by residues leucine 377 to glutamine 380, glutamate 400, and arginine 455. Catalysis depends on residues histidine 498 and glutamate 500.

This sequence belongs to the CTP synthase family. As to quaternary structure, homotetramer.

The catalysed reaction is UTP + L-glutamine + ATP + H2O = CTP + L-glutamate + ADP + phosphate + 2 H(+). It carries out the reaction L-glutamine + H2O = L-glutamate + NH4(+). The enzyme catalyses UTP + NH4(+) + ATP = CTP + ADP + phosphate + 2 H(+). It functions in the pathway pyrimidine metabolism; CTP biosynthesis via de novo pathway; CTP from UDP: step 2/2. Allosterically activated by GTP, when glutamine is the substrate; GTP has no effect on the reaction when ammonia is the substrate. The allosteric effector GTP functions by stabilizing the protein conformation that binds the tetrahedral intermediate(s) formed during glutamine hydrolysis. Inhibited by the product CTP, via allosteric rather than competitive inhibition. Its function is as follows. Catalyzes the ATP-dependent amination of UTP to CTP with either L-glutamine or ammonia as the source of nitrogen. Regulates intracellular CTP levels through interactions with the four ribonucleotide triphosphates. The polypeptide is CTP synthase (Methanoregula boonei (strain DSM 21154 / JCM 14090 / 6A8)).